The following is a 425-amino-acid chain: Pectate lyase L (425 aa).

An N-terminal signal peptide occupies residues 1–25 (MKYLNCFISTGLAAFFLVNSTSVLA). Cys28 and Cys114 are joined by a disulfide. Positions 209, 233, 234, and 237 each coordinate Ca(2+). Lys273 (proton acceptor) is an active-site residue. 5 residues coordinate Ca(2+): Asn402, Ser413, Ala416, Asp418, and Glu423.

The protein belongs to the polysaccharide lyase 9 family. It depends on Ca(2+) as a cofactor.

The protein resides in the secreted. The enzyme catalyses Eliminative cleavage of (1-&gt;4)-alpha-D-galacturonan to give oligosaccharides with 4-deoxy-alpha-D-galact-4-enuronosyl groups at their non-reducing ends.. Its pathway is glycan metabolism; pectin degradation; 2-dehydro-3-deoxy-D-gluconate from pectin: step 2/5. Presents an endo-cleaving activity on polygalacturonate or partially methylated pectin. Is effective in the maceration of plant tissue, and has an important role in soft-rot disease. Is 280-fold less active against polygalacturonate than the major pectate lyase PelB. When assayed on polygalacturonate, PelL releases oligogalacturonates of different sizes; upon prolonged incubation, PelL degrades the primary products to unsaturated tetramer and pentamer in addition to unsaturated dimer and trimer. When assayed on oligogalacturonates (degrees of polymerization of 2 to 8), it preferentially forms unsaturated tetramer, and displays the highest activity on the octamer. This chain is Pectate lyase L (pelL), found in Dickeya dadantii (strain 3937) (Erwinia chrysanthemi (strain 3937)).